The primary structure comprises 158 residues: UPF0266 membrane protein YobD (158 aa).

Helical transmembrane passes span 6 to 26 (LVLI…QFIM), 45 to 65 (IDSV…VTNH), and 67 to 87 (ALIT…IFWI).

This sequence belongs to the UPF0266 family.

The protein resides in the cell inner membrane. The chain is UPF0266 membrane protein YobD from Shigella boydii serotype 4 (strain Sb227).